A 407-amino-acid chain; its full sequence is Peptidase T (407 aa).

A Zn(2+)-binding site is contributed by histidine 82. The active site involves aspartate 84. Position 143 (aspartate 143) interacts with Zn(2+). The active-site Proton acceptor is the glutamate 177. Zn(2+)-binding residues include glutamate 178, aspartate 200, and histidine 382.

Belongs to the peptidase M20B family. Requires Zn(2+) as cofactor.

It localises to the cytoplasm. It carries out the reaction Release of the N-terminal residue from a tripeptide.. Functionally, cleaves the N-terminal amino acid of tripeptides. The protein is Peptidase T of Streptococcus pyogenes serotype M49 (strain NZ131).